A 23-amino-acid chain; its full sequence is Aurein-4.2 (23 aa).

Belongs to the frog skin active peptide (FSAP) family. Aurein subfamily. In terms of tissue distribution, expressed by the skin dorsal glands.

It is found in the secreted. Its function is as follows. Has no antimicrobial or anticancer activity. The polypeptide is Aurein-4.2 (Ranoidea aurea (Green and golden bell frog)).